The sequence spans 124 residues: Cholera enterotoxin subunit B (124 aa).

Residues M1–G21 form the signal peptide. Residues C30 and C107 are joined by a disulfide bond.

The holotoxin (choleragen) consists of a pentameric ring of B subunits whose central pore is occupied by the A subunit. The A subunit contains two chains, A1 and A2, linked by a disulfide bridge.

Its subcellular location is the secreted. It localises to the host cell membrane. In terms of biological role, the B subunit pentameric ring directs the A subunit to its target by binding to the GM1 gangliosides present on the surface of the intestinal epithelial cells. It can bind five GM1 gangliosides. It has no toxic activity by itself. The polypeptide is Cholera enterotoxin subunit B (ctxB) (Vibrio cholerae serotype O1 (strain ATCC 39315 / El Tor Inaba N16961)).